The primary structure comprises 176 residues: Japanin-like-RS (176 aa).

A signal peptide spans 1–24; sequence MKVLLCLVCSFYIIVSSITTMTTG. 2 disulfide bridges follow: cysteine 52/cysteine 174 and cysteine 138/cysteine 162. Asparagine 155 carries N-linked (GlcNAc...) asparagine glycosylation.

Belongs to the calycin superfamily. Lipocalin family. Homodimer; non-disulfide-linked. Each monomer accommodates one molecule of cholesterol in a pocket. Expressed in salivary glands.

The protein localises to the secreted. Salivary tick protein that modulates host immune response. This protein blocks dendritic cell (DC) differentiation from monocytes. In addition, it inhibits up-regulation of costimulatory molecules and pro-inflammatory cytokines in response to stimuli and promotes up-regulation of co-inhibitory molecules and the anti-inflammatory cytokine interleukin-10. It has a pocket to accomodate cholesterol, which may have immune-modulatory roles, either directly or through interactions with the host gut microbiota. In Rhipicephalus sanguineus (Brown dog tick), this protein is Japanin-like-RS.